We begin with the raw amino-acid sequence, 215 residues long: Small ribosomal subunit protein uS7 (215 aa).

This sequence belongs to the universal ribosomal protein uS7 family. In terms of assembly, part of the 30S ribosomal subunit.

Its function is as follows. One of the primary rRNA binding proteins, it binds directly to 16S rRNA where it nucleates assembly of the head domain of the 30S subunit. Is located at the subunit interface close to the decoding center. The polypeptide is Small ribosomal subunit protein uS7 (Thermococcus kodakarensis (strain ATCC BAA-918 / JCM 12380 / KOD1) (Pyrococcus kodakaraensis (strain KOD1))).